The following is a 400-amino-acid chain: MIIKPKIRGFICTTTHPVGCEKNIQAQIEYTKQQGKIANGPKRVLVIGSSAGYGMSSRVAAAYGSDASTIGVFFEKPATEKKPGSAGWYNSAAFEKQAKADGLYAKSINGDAFSHEIKAKVVELIKQDLGQIDAIIYSVAAPVRKLPDTGEVIRSSLKPIGETYISTAIDTNKDVIINATVEPATEEEVADTVTVMGGQDWELWLSALGEAGVLAEGLKTVAYSYIGTELTWPIYWDGALGKAKIDLDRASTAIQAQLAPLNGEAYVSVQKSVVTQASSAIPVMPLYISMVFKIMKEKGLHEGCMEQIYRLFTSQLYKQDGSAPETDQARRIRLDDWELRDDVQQACKELWPKITTENLFELTDYKEYKEEFVQLFGFSIDGVDYDADVDTVVEFDCLSV.

NAD(+) contacts are provided by residues 74-75 (FE), 111-112 (DA), and 139-140 (VA). Tyr-225 is a binding site for substrate. The active-site Proton donor is Tyr-235. Residues Lys-244 and 273 to 275 (VVT) each bind NAD(+).

This sequence belongs to the TER reductase family. In terms of assembly, monomer.

It catalyses the reaction a 2,3-saturated acyl-[ACP] + NAD(+) = a (2E)-enoyl-[ACP] + NADH + H(+). Its pathway is lipid metabolism; fatty acid biosynthesis. Involved in the final reduction of the elongation cycle of fatty acid synthesis (FAS II). Catalyzes the reduction of a carbon-carbon double bond in an enoyl moiety that is covalently linked to an acyl carrier protein (ACP). The protein is Enoyl-[acyl-carrier-protein] reductase [NADH] of Psychromonas ingrahamii (strain DSM 17664 / CCUG 51855 / 37).